The sequence spans 220 residues: tRNA (guanine-N(7)-)-methyltransferase (220 aa).

Residues E46, D71, D100, and D122 each contribute to the S-adenosyl-L-methionine site. Residue D122 is part of the active site. Substrate contacts are provided by residues K126, D158, and 196–199 (TEYE).

It belongs to the class I-like SAM-binding methyltransferase superfamily. TrmB family.

It carries out the reaction guanosine(46) in tRNA + S-adenosyl-L-methionine = N(7)-methylguanosine(46) in tRNA + S-adenosyl-L-homocysteine. It participates in tRNA modification; N(7)-methylguanine-tRNA biosynthesis. In terms of biological role, catalyzes the formation of N(7)-methylguanine at position 46 (m7G46) in tRNA. In Malacoplasma penetrans (strain HF-2) (Mycoplasma penetrans), this protein is tRNA (guanine-N(7)-)-methyltransferase.